The chain runs to 282 residues: Orotidine 5'-phosphate decarboxylase (282 aa).

The Proton donor role is filled by Lys-95.

It belongs to the OMP decarboxylase family. Type 2 subfamily.

It carries out the reaction orotidine 5'-phosphate + H(+) = UMP + CO2. Its pathway is pyrimidine metabolism; UMP biosynthesis via de novo pathway; UMP from orotate: step 2/2. The protein is Orotidine 5'-phosphate decarboxylase (pyrF) of Mycobacterium leprae (strain TN).